The primary structure comprises 64 residues: Large ribosomal subunit protein bL35 (64 aa).

The span at 1–14 (MKQKTHKGTAKRIK) shows a compositional bias: basic residues. The disordered stretch occupies residues 1 to 48 (MKQKTHKGTAKRIKVTGSGKLRREQANRRHLLEGKPSKRTRRLKGTED). Residues 21–36 (LRREQANRRHLLEGKP) are compositionally biased toward basic and acidic residues.

The protein belongs to the bacterial ribosomal protein bL35 family.

The protein is Large ribosomal subunit protein bL35 of Corynebacterium aurimucosum (strain ATCC 700975 / DSM 44827 / CIP 107346 / CN-1) (Corynebacterium nigricans).